The sequence spans 223 residues: Noggin-3 (223 aa).

Residues M1–G23 form the signal peptide. 2 N-linked (GlcNAc...) asparagine glycosylation sites follow: N60 and N93.

This sequence belongs to the noggin family. In terms of assembly, homodimer; disulfide-linked.

Its subcellular location is the secreted. May function as an inhibitor of bone morphogenetic proteins (BMP) signaling during later stages of development including late phases of dorsoventral patterning, to refine the early pattern set up by the interaction of chordino and BMP2/4. Not involved in organizer function or early phases of dorsoventral pattern formation. The chain is Noggin-3 (nog3) from Danio rerio (Zebrafish).